The sequence spans 615 residues: MAMNKDKPWTLYLLAVGLAVLAAVQFGLFSQPAVQAIPYSQFLQLLDQQKVSDLHIEHERILGRLQEPIDGHSVFSTVRVDPALSEQLGRSGVAFSGVVEDNTVATVMGALMPLLMLLALWYFLFHGLGQKQGLGGLMGVGKSRARVYVEHDTQVTFADVAGIDDVKGELTEIVSFLKNKAWYARLGAHVPKGTLLVGPPGTGKTLVAKAIAGEAAVPFFSISGSEFVEMFVGVGAARVRDLFDQARQAAPCIIFIDELDALGKMRGVGSFGGNDEKEQTLNQLLAELDGFDPREGVVLLAATNRPEVLDPALLRAGRFDRQILIDRPDRKGRLAILKVHLHKIIYKNDLDCERIAEITPGLTGADLANLVNEAAIVATRRSSQWVELQDFTAAVERLVAGIERKGSVLRSDERQVVAYHEMGHALAASSLPAMDPVHKVSIIPRAAGSLGYTLQRPTDDRYLISTQMLRDRLVVLMAGRAAEHLVFGQVSTGAADDLGRATDIARQLVTRFGMSPVLGQAVLERQQAGYLGDSLLRQERKDYSEQTAREIDLAVRGLLEEAYGRARALLEQRRDDLDAGARLLLAKETITPEEFPALQPQANEPATYVLVDATK.

The Cytoplasmic portion of the chain corresponds to 1 to 8 (MAMNKDKP). A helical membrane pass occupies residues 9–29 (WTLYLLAVGLAVLAAVQFGLF). The Periplasmic portion of the chain corresponds to 30 to 104 (SQPAVQAIPY…FSGVVEDNTV (75 aa)). A helical membrane pass occupies residues 105 to 125 (ATVMGALMPLLMLLALWYFLF). The Cytoplasmic portion of the chain corresponds to 126 to 615 (HGLGQKQGLG…ATYVLVDATK (490 aa)). 198–205 (GPPGTGKT) is a binding site for ATP. Histidine 420 lines the Zn(2+) pocket. Glutamate 421 is an active-site residue. Zn(2+)-binding residues include histidine 424 and aspartate 497.

This sequence in the central section; belongs to the AAA ATPase family. It in the C-terminal section; belongs to the peptidase M41 family. As to quaternary structure, homohexamer. It depends on Zn(2+) as a cofactor.

The protein localises to the cell inner membrane. Its function is as follows. Acts as a processive, ATP-dependent zinc metallopeptidase for both cytoplasmic and membrane proteins. Plays a role in the quality control of integral membrane proteins. The sequence is that of ATP-dependent zinc metalloprotease FtsH from Pseudomonas putida (strain ATCC 700007 / DSM 6899 / JCM 31910 / BCRC 17059 / LMG 24140 / F1).